The following is a 616-amino-acid chain: Dihydroxy-acid dehydratase (616 aa).

D81 contributes to the Mg(2+) binding site. C122 provides a ligand contact to [2Fe-2S] cluster. Mg(2+) is bound by residues D123 and K124. Position 124 is an N6-carboxylysine (K124). Residue C195 participates in [2Fe-2S] cluster binding. E491 is a Mg(2+) binding site. The active-site Proton acceptor is the S517.

This sequence belongs to the IlvD/Edd family. Homodimer. [2Fe-2S] cluster is required as a cofactor. It depends on Mg(2+) as a cofactor.

It catalyses the reaction (2R)-2,3-dihydroxy-3-methylbutanoate = 3-methyl-2-oxobutanoate + H2O. The catalysed reaction is (2R,3R)-2,3-dihydroxy-3-methylpentanoate = (S)-3-methyl-2-oxopentanoate + H2O. It participates in amino-acid biosynthesis; L-isoleucine biosynthesis; L-isoleucine from 2-oxobutanoate: step 3/4. It functions in the pathway amino-acid biosynthesis; L-valine biosynthesis; L-valine from pyruvate: step 3/4. Its function is as follows. Functions in the biosynthesis of branched-chain amino acids. Catalyzes the dehydration of (2R,3R)-2,3-dihydroxy-3-methylpentanoate (2,3-dihydroxy-3-methylvalerate) into 2-oxo-3-methylpentanoate (2-oxo-3-methylvalerate) and of (2R)-2,3-dihydroxy-3-methylbutanoate (2,3-dihydroxyisovalerate) into 2-oxo-3-methylbutanoate (2-oxoisovalerate), the penultimate precursor to L-isoleucine and L-valine, respectively. This chain is Dihydroxy-acid dehydratase, found in Escherichia coli O7:K1 (strain IAI39 / ExPEC).